Here is a 308-residue protein sequence, read N- to C-terminus: HPr kinase/phosphorylase (308 aa).

Catalysis depends on residues His138 and Lys159. 153–160 (GESGLGKS) lines the ATP pocket. Residue Ser160 participates in Mg(2+) binding. The active-site Proton acceptor; for phosphorylation activity. Proton donor; for dephosphorylation activity is Asp177. Residues 201–210 (LEVRGLGLLD) are important for the catalytic mechanism of both phosphorylation and dephosphorylation. Glu202 contributes to the Mg(2+) binding site. The active site involves Arg243. Positions 264 to 269 (QVAAGR) are important for the catalytic mechanism of dephosphorylation.

This sequence belongs to the HPrK/P family. In terms of assembly, homohexamer. Mg(2+) serves as cofactor.

The enzyme catalyses [HPr protein]-L-serine + ATP = [HPr protein]-O-phospho-L-serine + ADP + H(+). The catalysed reaction is [HPr protein]-O-phospho-L-serine + phosphate + H(+) = [HPr protein]-L-serine + diphosphate. In terms of biological role, catalyzes the ATP- as well as the pyrophosphate-dependent phosphorylation of a specific serine residue in HPr, a phosphocarrier protein of the phosphoenolpyruvate-dependent sugar phosphotransferase system (PTS). HprK/P also catalyzes the pyrophosphate-producing, inorganic phosphate-dependent dephosphorylation (phosphorolysis) of seryl-phosphorylated HPr (P-Ser-HPr). This is HPr kinase/phosphorylase from Bordetella petrii (strain ATCC BAA-461 / DSM 12804 / CCUG 43448).